A 436-amino-acid chain; its full sequence is Tol-Pal system protein TolB (436 aa).

The N-terminal stretch at 1 to 19 (MVKCSLIRALMVVAGLVGA) is a signal peptide.

It belongs to the TolB family. The Tol-Pal system is composed of five core proteins: the inner membrane proteins TolA, TolQ and TolR, the periplasmic protein TolB and the outer membrane protein Pal. They form a network linking the inner and outer membranes and the peptidoglycan layer.

The protein resides in the periplasm. Functionally, part of the Tol-Pal system, which plays a role in outer membrane invagination during cell division and is important for maintaining outer membrane integrity. The protein is Tol-Pal system protein TolB of Rhizobium etli (strain ATCC 51251 / DSM 11541 / JCM 21823 / NBRC 15573 / CFN 42).